The primary structure comprises 565 residues: MVAEDAPVRGTCRVLFRTTTLIFLCTLLALSISILYESLIIQKQIMSQAGSTGSNFRLGSITDLLNNILSVANQIIYNSAVALPLQLDTLESTLLTAIKSLQTSDKLEQNCSWGAALINDNRYINGINQFYFSIAEGRNLTLGPLLNIPSFIPTATTPEGCTRIPSFSLTKTHWCYTHNVILNGCQDHVSSNQFVSMGIIEPTSAGFPSFRTLKTLYLSDGVNRKSCSISTVPGGCMMYCFVSTQPERDDYLSTAPPEQRIIIMYYNDTIVERIINPPGVLDVWATLNPGTGSGVYYLGWVLFPTYGGVIKDTSLWNNQANKYFIPQMVAALCSQNQATQVQNAKSSYYSSWFGNRMIQSGILACPLQQDLTNECLILPFSNDQVLMGAEGRLYMYGDSVYYYQRSNSWWPMTMLYKVTITFTNGQPSAISAQNVPTQQVPRPGTGDCSATNRCPGFCLKGVYADAWLLTNPSSTSTFGSEATFTGSYLNAATQRINPTMYIANNTQIISSQQFGSSGQEAAYGHTTCFRDTGSVMVYCIYIIELSSSLLGQFQIVPFIRQVTLS.

Residues 1–20 (MVAEDAPVRGTCRVLFRTTT) are Intravirion-facing. A helical transmembrane segment spans residues 21–41 (LIFLCTLLALSISILYESLII). The Virion surface portion of the chain corresponds to 42–565 (QKQIMSQAGS…VPFIRQVTLS (524 aa)). Residues asparagine 110 and asparagine 139 are each glycosylated (N-linked (GlcNAc...) asparagine; by host). 3 disulfide bridges follow: cysteine 161–cysteine 185, cysteine 175–cysteine 236, and cysteine 227–cysteine 240. The tract at residues 223-228 (NRKSCS) is involved in neuraminidase activity. The N-linked (GlcNAc...) asparagine; by host glycan is linked to asparagine 267. 3 disulfide bridges follow: cysteine 333–cysteine 454, cysteine 365–cysteine 375, and cysteine 448–cysteine 458. Residue asparagine 504 is glycosylated (N-linked (GlcNAc...) asparagine; by host). Cysteine 528 and cysteine 539 are joined by a disulfide.

Belongs to the paramyxoviruses hemagglutinin-neuraminidase family. Homotetramer; composed of disulfide-linked homodimers. Interacts with F protein trimer.

The protein resides in the virion membrane. Its subcellular location is the host cell membrane. It catalyses the reaction Hydrolysis of alpha-(2-&gt;3)-, alpha-(2-&gt;6)-, alpha-(2-&gt;8)- glycosidic linkages of terminal sialic acid residues in oligosaccharides, glycoproteins, glycolipids, colominic acid and synthetic substrates.. Its function is as follows. Attaches the virus to sialic acid-containing cell receptors and thereby initiating infection. Binding of HN protein to the receptor induces a conformational change that allows the F protein to trigger virion/cell membranes fusion. Neuraminidase activity ensures the efficient spread of the virus by dissociating the mature virions from the neuraminic acid containing glycoproteins. This chain is Hemagglutinin-neuraminidase (HN), found in Parainfluenza virus 5 (isolate Canine/CPI-) (PIV5).